The following is a 56-amino-acid chain: Small ribosomal subunit protein uS14 (56 aa).

Residues C21, C24, C39, and C42 each coordinate Zn(2+).

It belongs to the universal ribosomal protein uS14 family. As to quaternary structure, component of the 40S small ribosomal subunit. The cofactor is Zn(2+).

The protein localises to the cytoplasm. It is found in the cytosol. It localises to the rough endoplasmic reticulum. The sequence is that of Small ribosomal subunit protein uS14 (RpS29) from Drosophila melanogaster (Fruit fly).